A 355-amino-acid polypeptide reads, in one-letter code: Protein RecA (355 aa).

65-72 (GPESSGKT) provides a ligand contact to ATP.

This sequence belongs to the RecA family.

The protein localises to the cytoplasm. Its function is as follows. Can catalyze the hydrolysis of ATP in the presence of single-stranded DNA, the ATP-dependent uptake of single-stranded DNA by duplex DNA, and the ATP-dependent hybridization of homologous single-stranded DNAs. It interacts with LexA causing its activation and leading to its autocatalytic cleavage. The protein is Protein RecA of Pseudomonas putida (Arthrobacter siderocapsulatus).